Consider the following 622-residue polypeptide: DNA mismatch repair protein MutL (622 aa).

This sequence belongs to the DNA mismatch repair MutL/HexB family.

In terms of biological role, this protein is involved in the repair of mismatches in DNA. It is required for dam-dependent methyl-directed DNA mismatch repair. May act as a 'molecular matchmaker', a protein that promotes the formation of a stable complex between two or more DNA-binding proteins in an ATP-dependent manner without itself being part of a final effector complex. The sequence is that of DNA mismatch repair protein MutL from Actinobacillus pleuropneumoniae serotype 3 (strain JL03).